The sequence spans 341 residues: MQYKKSLVASALVATSLAAYAPKDPWSTLTPSATYKGGITDYSSTFGIAVEPIATTASSKAKRAAAISQIGDGQIQATTKTTAAAVSQIGDGQIQATTKTKAAAVSQIGDGQIQATTKTTSAKTTAAAVSQIGDGQIQATTKTKAAAVSQIGDGQIQATTKTTAAAVSQIGDGQIQATTKTTAAAVSQIGDGQIQATTNTTVAPVSQITDGQIQATTLTSATIIPSPAPAPITNGTDPVTAETCKSSGTLEMNLKGGILTDGKGRIGSIVANRQFQFDGPPPQAGAIYAAGWSITPEGNLAIGDQDTFYQCLSGNFYNLYDEHIGTQCNAVHLQAIDLVNC.

The signal sequence occupies residues 1 to 18 (MQYKKSLVASALVATSLA). Positions 19–63 (AYAPKDPWSTLTPSATYKGGITDYSSTFGIAVEPIATTASSKAKR) are excised as a propeptide. PIR1/2/3 repeat units lie at residues 64 to 82 (AAAISQIGDGQIQATTKTT), 83 to 101 (AAAVSQIGDGQIQATTKTK), 102 to 120 (AAAVSQIGDGQIQATTKTT), 126 to 144 (AAAVSQIGDGQIQATTKTK), 145 to 163 (AAAVSQIGDGQIQATTKTT), 164 to 182 (AAAVSQIGDGQIQATTKTT), 183 to 201 (AAAVSQIGDGQIQATTNTT), and 202 to 220 (VAPVSQITDGQIQATTLTS).

It belongs to the PIR protein family. Post-translationally, covalently linked to beta-1,3-glucan of the inner cell wall layer via an alkali-sensitive ester linkage between the gamma-carboxyl group of glutamic acids, arising from specific glutamines within the PIR1/2/3 repeats, and hydroxyl groups of glucoses of beta-1,3-glucan chains. O-glycosylated. Extensively O-mannosylated.

Its subcellular location is the secreted. It localises to the cell wall. Functionally, component of the outer cell wall layer. Required for stability of the cell wall and for optimal growth. Required for resistance against several antifungal and cell wall-perturbing agents and for tolerance to heat shock. This is Cell wall mannoprotein PIR1 (PIR1) from Saccharomyces cerevisiae (strain YJM789) (Baker's yeast).